The sequence spans 442 residues: DNA N(6)-methyladenine demethylase ALKBH1D (442 aa).

Positions 135–144 are enriched in polar residues; that stretch reads SMVHFDSTNP. Residues 135–185 form a disordered region; the sequence is SMVHFDSTNPSSSSKSSQSQNLKIRKVRNHRNSGFKSRDQSPQRIKDPPPF. The span at 145 to 154 shows a compositional bias: low complexity; the sequence is SSSSKSSQSQ. A compositionally biased stretch (basic residues) spans 157-167; it reads KIRKVRNHRNS. Positions 170-183 are enriched in basic and acidic residues; that stretch reads KSRDQSPQRIKDPP. A Fe2OG dioxygenase domain is found at 332 to 442; that stretch reads SPDICIVNFY…GRLNLTFRHF (111 aa). 339–341 lines the 2-oxoglutarate pocket; it reads NFY. Residues His350, Asp352, and His410 each contribute to the Fe cation site. A 2-oxoglutarate-binding site is contributed by 434–440; the sequence is RLNLTFR.

The protein belongs to the alkB family. The cofactor is Fe(2+). As to expression, expressed at low levels in roots, seedlings and rosette leaves, but barely in cauline leaves, stems, siliques and flowers.

The protein localises to the nucleus. It is found in the cytoplasm. The catalysed reaction is an N(6)-methyl-2'-deoxyadenosine in DNA + 2-oxoglutarate + O2 = a 2'-deoxyadenosine in DNA + formaldehyde + succinate + CO2. In terms of biological role, dioxygenase that catalyzes DNA N(6)-methyladenine (6 mA) demethylation to modulate gene expression and regulate seed germination. The protein is DNA N(6)-methyladenine demethylase ALKBH1D of Arabidopsis thaliana (Mouse-ear cress).